Reading from the N-terminus, the 154-residue chain is Pro-corazonin (154 aa).

The N-terminal stretch at 1–19 (MLRLLLLPLFLFTLSMCMG) is a signal peptide. Glutamine 20 is subject to Pyrrolidone carboxylic acid. Asparagine amide is present on asparagine 30. Residues 70 to 154 (LERCLSQLQR…SAEPNVFGKH (85 aa)) constitute a propeptide that is removed on maturation. The interval 91-119 (DFNANRVDPDPENSAHPRLSNSNGENVLY) is disordered. Over residues 109–119 (LSNSNGENVLY) the composition is skewed to polar residues.

The protein belongs to the corazonin family. As to expression, from late embryo to larva, expression is consistently detected in three neuronal groups: dorso-lateral neurons (DL), dorso-medial neurons (DM), and neurons in the ventral nerve cord (vCrz). Both the vCrz and DM groups die via programmed cell death during metamorphosis, whereas the DL neurons persist to adulthood. In adults, expression is seen in a cluster of six to eight neurons per lobe in the pars lateralis (DLP), in numerous neuronal cells in the optic lobes, and in a novel group of four abdominal ganglionic neurons present only in males (ms-aCrz). Projections of the ms-aCrz neurons terminate within the ventral nerve cord, implying a role as interneurons. Terminals of the DLP neurons are found in the retrocerebral complex that produces juvenile hormone and adipokinetic hormone, located in the vicinity of terminals emanating from PDF-containing pacemaking neurons.

The protein localises to the secreted. In terms of biological role, cardioactive peptide. Corazonin is probably involved in the physiological regulation of the heart beat. Clock (Clk) and cycle (cyc) proteins negatively regulate Crz transcription in a cell-specific manner. This Drosophila melanogaster (Fruit fly) protein is Pro-corazonin (Crz).